A 367-amino-acid chain; its full sequence is Protein RecA (367 aa).

The segment covering 1 to 14 (MSTEVNANQSPNAE) has biased composition (polar residues). Residues 1–24 (MSTEVNANQSPNAESRQEAARSGE) are disordered. The segment covering 15-24 (SRQEAARSGE) has biased composition (basic and acidic residues). 84 to 91 (GPESSGKT) lines the ATP pocket. A disordered region spans residues 348–367 (GSEVSSNSMRPLTTANRKAA). Positions 349–367 (SEVSSNSMRPLTTANRKAA) are enriched in polar residues.

It belongs to the RecA family.

Its subcellular location is the cytoplasm. Functionally, can catalyze the hydrolysis of ATP in the presence of single-stranded DNA, the ATP-dependent uptake of single-stranded DNA by duplex DNA, and the ATP-dependent hybridization of homologous single-stranded DNAs. It interacts with LexA causing its activation and leading to its autocatalytic cleavage. This is Protein RecA from Prochlorococcus marinus (strain MIT 9211).